The chain runs to 331 residues: Betaine-homocysteine S-methyltransferase (331 aa).

Residues 3–324 (VNQKWNWDTK…TDVLAIRKYV (322 aa)) enclose the Hcy-binding domain. Zn(2+) contacts are provided by C243, C309, and C310.

Belongs to the Betaine-homocysteine S-methyltransferase, BHMT family. Requires Zn(2+) as cofactor.

The catalysed reaction is L-homocysteine + glycine betaine = N,N-dimethylglycine + L-methionine. The protein operates within amino-acid biosynthesis; L-methionine biosynthesis via de novo pathway. Involved in the regulation of homocysteine metabolism. Converts betaine and homocysteine to dimethylglycine and methionine, respectively. This is Betaine-homocysteine S-methyltransferase from Drosophila melanogaster (Fruit fly).